The primary structure comprises 376 residues: Heme chaperone HemW (376 aa).

Positions 1–233 (MFTLPPISLY…DKLLKKAGYK (233 aa)) constitute a Radical SAM core domain. Residue tyrosine 10 coordinates S-adenosyl-L-methionine. The [4Fe-4S] cluster site is built by cysteine 16, cysteine 20, and cysteine 23. Residues glycine 66, 67 to 68 (GT), glutamate 99, glutamine 126, arginine 138, and aspartate 162 contribute to the S-adenosyl-L-methionine site.

The protein belongs to the anaerobic coproporphyrinogen-III oxidase family. HemW subfamily. The cofactor is [4Fe-4S] cluster.

The protein localises to the cytoplasm. Functionally, probably acts as a heme chaperone, transferring heme to an unknown acceptor. Binds one molecule of heme per monomer, possibly covalently. Binds 1 [4Fe-4S] cluster. The cluster is coordinated with 3 cysteines and an exchangeable S-adenosyl-L-methionine. The sequence is that of Heme chaperone HemW from Buchnera aphidicola subsp. Acyrthosiphon pisum (strain APS) (Acyrthosiphon pisum symbiotic bacterium).